The following is a 205-amino-acid chain: MPVVFVAASKLPTPFATFTMHGFLDEATGREHVVLSLGDIADGQPVLGRLHSECLTGDALFSQRCDCGSQLEAALQAIAREGRGVLLYLRQEGRGIGLLNKIRAYELQDGGADTVEANERLGFAADQRDYAICLPMLEHLGVKSLRLMTNNPRKVKALTDMNIVVAERVPLHTGHNPHNRYYLATKAGKLGHMLGNEHQGEVPQA.

49-53 (RLHSE) provides a ligand contact to GTP. Zn(2+) is bound by residues Cys54, Cys65, and Cys67. GTP is bound by residues Gln70, 92-94 (EGR), and Thr114. Asp126 acts as the Proton acceptor in catalysis. Arg128 (nucleophile) is an active-site residue. The GTP site is built by Thr149 and Lys154.

It belongs to the GTP cyclohydrolase II family. Zn(2+) is required as a cofactor.

The enzyme catalyses GTP + 4 H2O = 2,5-diamino-6-hydroxy-4-(5-phosphoribosylamino)-pyrimidine + formate + 2 phosphate + 3 H(+). Its pathway is cofactor biosynthesis; riboflavin biosynthesis; 5-amino-6-(D-ribitylamino)uracil from GTP: step 1/4. Functionally, catalyzes the conversion of GTP to 2,5-diamino-6-ribosylamino-4(3H)-pyrimidinone 5'-phosphate (DARP), formate and pyrophosphate. The chain is GTP cyclohydrolase-2 from Pseudomonas putida (strain ATCC 700007 / DSM 6899 / JCM 31910 / BCRC 17059 / LMG 24140 / F1).